The chain runs to 117 residues: Large ribosomal subunit protein bL20c (117 aa).

The protein belongs to the bacterial ribosomal protein bL20 family.

The protein resides in the plastid. The protein localises to the chloroplast. In terms of biological role, binds directly to 23S ribosomal RNA and is necessary for the in vitro assembly process of the 50S ribosomal subunit. It is not involved in the protein synthesizing functions of that subunit. This is Large ribosomal subunit protein bL20c from Barbarea verna (Land cress).